The following is a 375-amino-acid chain: MGSNKIWLRAETKPAEARSALTPTTCKALIDAGYEVTVERSTQRIFDDDEFAKVGAPLVEEGSWVKDAPKDAYILGLKELPEDDFPLEHVHISFAHCYKEQAGWEKVLSRWPRGGGVLLDLEFLTDDAGRRVAAFGFSAGYAGAALAVKNWAWQLTHPEGEPLAGEKPYANQDLLIQSVKESLQAGQKQSGKSPKILVIGALGRCGKGAVQLAKDVGIPESDIIQWDMEETKKGGPFKEIVEDADIFVNCIYLSSKIPHFVNVESLSTPSRRLSVICDVSADTTNPNNPIPVYNITTTFDKPTVPVTLPNGTQGTPLSVISIDHLPSLLPRESSEMFSEALMPSLLQLKDRENARVWKQAEDLFNQKVATLPQTA.

L-saccharopine is bound by residues Arg-18 and Lys-78. Lys-78 acts as the Proton acceptor in catalysis. Residue His-96 is the Proton donor of the active site. L-saccharopine is bound at residue Gln-101. Residue Arg-130 coordinates NAD(+). L-saccharopine is bound by residues Arg-131 and Phe-135. NAD(+) contacts are provided by residues 203 to 204, Asp-227, Thr-231, Tyr-252, and Val-279; that span reads GR. The cysteines at positions 205 and 250 are disulfide-linked. Residue 280–282 coordinates L-saccharopine; it reads SAD. 322 to 325 contacts NAD(+); that stretch reads IDHL.

It belongs to the AlaDH/PNT family. As to quaternary structure, monomer.

It catalyses the reaction L-saccharopine + NAD(+) + H2O = L-lysine + 2-oxoglutarate + NADH + H(+). The protein operates within amino-acid biosynthesis; L-lysine biosynthesis via AAA pathway; L-lysine from L-alpha-aminoadipate (fungal route): step 3/3. Its function is as follows. Catalyzes the NAD(+)-dependent cleavage of saccharopine to L-lysine and 2-oxoglutarate, the final step in the alpha-aminoadipate (AAA) pathway for lysin biosynthesis. The sequence is that of Saccharopine dehydrogenase [NAD(+), L-lysine-forming] from Emericella nidulans (strain FGSC A4 / ATCC 38163 / CBS 112.46 / NRRL 194 / M139) (Aspergillus nidulans).